A 307-amino-acid chain; its full sequence is uncharacterized protein (307 aa).

Residues 5–233 enclose the ABC transporter domain; that stretch reads VQTNGLTKTY…NTEYIELVTP (229 aa). ATP is bound at residue 37 to 44; the sequence is GPNGAGKT.

This sequence belongs to the ABC transporter superfamily.

This is an uncharacterized protein from Bacillus subtilis (strain 168).